The following is a 398-amino-acid chain: Arylacetamide deacetylase (398 aa).

Residues 1–5 (MGRTI) are Cytoplasmic-facing. A helical; Signal-anchor for type II membrane protein transmembrane segment spans residues 6-26 (FLLISVVLVAYYIYIPLPDDI). Residues 27–398 (EEPWKIILGN…QYLNWLHKNL (372 aa)) are Lumenal-facing. An N-linked (GlcNAc...) asparagine glycan is attached at N77. The Involved in the stabilization of the negatively charged intermediate by the formation of the oxyanion hole signature appears at 110-112 (HGG). Residues C115 and C339 are joined by a disulfide bond. S188 is a catalytic residue. N-linked (GlcNAc...) asparagine glycosylation is found at N192, N281, and N324. Active-site residues include D342 and H372.

The protein belongs to the 'GDXG' lipolytic enzyme family. Highest levels in liver with lower levels in jejunum, kidney and testis.

Its subcellular location is the endoplasmic reticulum membrane. It localises to the microsome membrane. It catalyses the reaction a triacylglycerol + H2O = a diacylglycerol + a fatty acid + H(+). Displays cellular triglyceride lipase activity in liver, increases the levels of intracellular fatty acids derived from the hydrolysis of newly formed triglyceride stores and plays a role in very low-density lipoprotein assembly. Displays serine esterase activity in liver. Deacetylates a variety of arylacetamide substrates, including xenobiotic compounds and procarcinogens, converting them to the primary arylamide compounds and increasing their toxicity. In Rattus norvegicus (Rat), this protein is Arylacetamide deacetylase (Aadac).